Here is a 1146-residue protein sequence, read N- to C-terminus: Myosin heavy chain kinase A (1146 aa).

Residues 1-25 (MFNIKKRKESITGIPPINVNSPQSV) form a disordered region. Positions 100 to 120 (EQMEDQLEKTMKVVRNHTDSL) form a coiled coil. Residues 158-191 (IQEKKSTSSPLVKGGISGGGGSGGDDSFDGANIS) form a disordered region. The segment covering 172–181 (GISGGGGSGG) has biased composition (gly residues). Coiled-coil stretches lie at residues 187-241 (GANI…KRIE) and 297-502 (SKIE…ASIS). The segment at 500 to 551 (SISPISSVPKSPITTKRSSIILNSPPMTSQQSSPKIQDLLSSSGSSSVSGIN) is pseudosubstrate/autoinhibitory domain. The span at 521–534 (LNSPPMTSQQSSPK) shows a compositional bias: polar residues. The disordered stretch occupies residues 521 to 540 (LNSPPMTSQQSSPKIQDLLS). The interval 552–852 (ISSETGEMGI…KVGAKQLPKA (301 aa)) is catalytic. An Alpha-type protein kinase domain is found at 564–808 (EFDPIINKWI…VCALLDLDVK (245 aa)). Position 778–783 (778–783 (GLGNLG)) interacts with ATP. 7 WD repeats span residues 867–897 (SFRERVNSIAFFDNQKLLCAGYGDGTYRVFD), 910–938 (GHRKSIESIACNSNYIFTSSPDNTIKVHI), 952–980 (GHTGEVNCVVANEKYLFSCSYDKTIKVWD), 993–1021 (VHTKYIKTLALSGRYLFSGGNDQIIYVWD), 1033–1061 (GHEDWVLSLHCTASYLFSTSKDNVIKIWD), 1073–1101 (GHWNSVSSCVVKDRYLYSGSEDNSIKVWD), and 1114–1142 (SHSLGVKCLMVFNNQIISAAFDGSIKVWE).

It belongs to the protein kinase superfamily. Alpha-type protein kinase family. ALPK subfamily. In terms of assembly, oligomer. The cofactor is Mg(2+). Requires Mn(2+) as cofactor. In terms of processing, the N-terminus is blocked.

It catalyses the reaction L-threonyl-[myosin heavy-chain] + ATP = O-phospho-L-threonyl-[myosin heavy-chain] + ADP + H(+). Its function is as follows. Catalyzes its autophosphorylation, which is needed for enzymatic activity and phosphorylates myosin II heavy chain at a threonine in the C-terminal tail region. This phosphorylation is critical for regulating the assembly and disassembly of myosin II filament, affecting myosin localization during an array of cellular contractile events, including cytokinesis and capping of cell surface receptors as well as chemotactic cell locomotion. This is Myosin heavy chain kinase A (mhkA) from Dictyostelium discoideum (Social amoeba).